We begin with the raw amino-acid sequence, 102 residues long: uncharacterized protein (102 aa).

Residues 5–27 (IYRSNLVIVITLFVSLSYYHTCF) traverse the membrane as a helical segment.

The protein resides in the host membrane. This is an uncharacterized protein from Microplitis demolitor (Parasitoid wasp).